The following is a 551-amino-acid chain: Glucan 1,4-alpha-maltotetraohydrolase (551 aa).

An N-terminal signal peptide occupies residues Met-1–Ala-21. Residues Asp-22, Gln-23, His-34, Asp-37, and Glu-38 each contribute to the Ca(2+) site. A substrate-binding site is contributed by Tyr-99 to Phe-100. Asn-137 provides a ligand contact to Ca(2+). Residue His-138 coordinates substrate. A disulfide bridge connects residues Cys-161 and Cys-171. Ca(2+) contacts are provided by Asp-172 and Asp-175. A substrate-binding site is contributed by Phe-177–Glu-181. Asp-183 contributes to the Ca(2+) binding site. Arg-212 lines the substrate pocket. Catalysis depends on Asp-214, which acts as the Nucleophile. Gly-218 is a Ca(2+) binding site. Residues Cys-237 and Cys-272 are joined by a disulfide bond. The Proton donor role is filled by Glu-240. Substrate-binding residues include His-314 and Gln-326. The region spanning Gly-449–Phe-551 is the CBM20 domain.

It belongs to the glycosyl hydrolase 13 family. As to quaternary structure, monomer. Ca(2+) is required as a cofactor.

It localises to the secreted. The catalysed reaction is Hydrolysis of (1-&gt;4)-alpha-D-glucosidic linkages in amylaceous polysaccharides, to remove successive maltotetraose residues from the non-reducing chain ends.. Its pathway is glycan degradation; starch degradation. The chain is Glucan 1,4-alpha-maltotetraohydrolase (mta) from Roseateles saccharophilus (Pseudomonas saccharophila).